The primary structure comprises 96 residues: Mitochondrial import inner membrane translocase subunit Tim13-B (96 aa).

The Twin CX3C motif motif lies at 47–70; it reads CFRKCIGKPGGSLDNSEQKCVAMC. Disulfide bonds link Cys47–Cys70 and Cys51–Cys66.

It belongs to the small Tim family. As to quaternary structure, heterohexamer; composed of 3 copies of TIMM8 (TIMM8A or TIMM8B) and 3 copies of TIMM13, named soluble 70 kDa complex. Associates with the TIM22 complex, whose core is composed of TIMM22.

It localises to the mitochondrion inner membrane. Its function is as follows. Mitochondrial intermembrane chaperone that participates in the import and insertion of some multi-pass transmembrane proteins into the mitochondrial inner membrane. Also required for the transfer of beta-barrel precursors from the TOM complex to the sorting and assembly machinery (SAM complex) of the outer membrane. Acts as a chaperone-like protein that protects the hydrophobic precursors from aggregation and guide them through the mitochondrial intermembrane space. The TIMM8-TIMM13 complex mediates the import of some proteins while the predominant TIMM9-TIMM10 70 kDa complex mediates the import of much more proteins. This chain is Mitochondrial import inner membrane translocase subunit Tim13-B (timm13-b), found in Xenopus laevis (African clawed frog).